The following is a 318-amino-acid chain: Mediator of RNA polymerase II transcription subunit 30 (318 aa).

Low complexity predominate over residues 1–13 (MWKYGQNQGNQGP). 2 disordered regions span residues 1-92 (MWKY…QQQQ) and 120-142 (GGGVVPQQQQQQPQQNMPQQNIP). Over residues 14–33 (SSGGGGGGGPNMMPMGGFGM) the composition is skewed to gly residues. 3 stretches are compositionally biased toward low complexity: residues 34–55 (QHGNMQQMHMSPQHQQQQQQMG), 78–92 (PGMSPQHQMQQQQQQ), and 124–142 (VPQQQQQQPQQNMPQQNIP).

The protein belongs to the Mediator complex subunit 30 family. As to quaternary structure, component of the Mediator complex, which includes at least CDK8, MED4, MED6, MED11, MED14, MED17, MED18, MED20, MED21, MED22, MED27, MED28, MED30 and MED31.

It is found in the nucleus. Functionally, component of the Mediator complex, a coactivator involved in the regulated transcription of nearly all RNA polymerase II-dependent genes. Mediator functions as a bridge to convey information from gene-specific regulatory proteins to the basal RNA polymerase II transcription machinery. Mediator is recruited to promoters by direct interactions with regulatory proteins and serves as a scaffold for the assembly of a functional preinitiation complex with RNA polymerase II and the general transcription factors. The chain is Mediator of RNA polymerase II transcription subunit 30 (MED30) from Drosophila melanogaster (Fruit fly).